The following is a 627-amino-acid chain: BEL1-like homeodomain protein 4 (627 aa).

Residues 206–225 (SSQHHHHQVVGHFGSSSSSP) are disordered. Low complexity predominate over residues 215-225 (VGHFGSSSSSP). The SR/KY domain stretch occupies residues 241-257 (SKYTKPAQELLEEFCSV). Residues 263 to 307 (KKNKLSRNNSNPNTTGGGGGGGSSSSAGTANDSPPLSPADRIEHQ) form a disordered region. A BELL domain region spans residues 302 to 373 (DRIEHQRRKV…CLKDAVAVQL (72 aa)). The homeobox DNA-binding region spans 424-486 (AWRPQRGLPE…NARVRLWKPM (63 aa)). The interval 494–530 (EAKEREEAEEENENQQQQRRQQQTNNNDTKPNNNENN) is disordered. The segment covering 507-530 (NQQQQRRQQQTNNNDTKPNNNENN) has biased composition (low complexity).

Belongs to the TALE/BELL homeobox family. In terms of assembly, may form heterodimeric complexes with TALE/KNOX proteins. Interacts with OFP1, OFP2 and OFP5. Interacts with KNATM, isoform KNATM-B. In terms of tissue distribution, expressed in lateral organs.

It is found in the nucleus. Functionally, transcription factor that establishes leaf shape by repressing growth in specific subdomains of the leaf. Negatively regulates knox homeobox gene KNAT1/BP expression. The polypeptide is BEL1-like homeodomain protein 4 (BLH4) (Arabidopsis thaliana (Mouse-ear cress)).